Here is a 208-residue protein sequence, read N- to C-terminus: Small ribosomal subunit protein uS4 (208 aa).

The region spanning 98-161 (RRLDNVVYRM…KSNPQVVRAM (64 aa)) is the S4 RNA-binding domain.

Belongs to the universal ribosomal protein uS4 family. In terms of assembly, part of the 30S ribosomal subunit. Contacts protein S5. The interaction surface between S4 and S5 is involved in control of translational fidelity.

Its function is as follows. One of the primary rRNA binding proteins, it binds directly to 16S rRNA where it nucleates assembly of the body of the 30S subunit. In terms of biological role, with S5 and S12 plays an important role in translational accuracy. This chain is Small ribosomal subunit protein uS4, found in Helicobacter acinonychis (strain Sheeba).